Here is a 36-residue protein sequence, read N- to C-terminus: KVVHLRPRSSFSSEDEYQIYLRNVSKYIQLYGRPRF.

F36 bears the Phenylalanine amide mark.

The protein belongs to the NPY family. As to expression, central and peripheral nervous system, and muscular pharynx.

The protein resides in the secreted. May perform an important neurotransmitter function and may regulate muscular activity. This is Neuropeptide F from Arthurdendyus triangulatus (New Zealand flatworm).